The chain runs to 367 residues: Probable protein phosphatase 2C 57 (367 aa).

The disordered stretch occupies residues 1–29; it reads MEEHRLGGGGGGGGGGGRPPIPGAAGRKL. Positions 7–18 are enriched in gly residues; the sequence is GGGGGGGGGGGR. Positions 67–331 constitute a PPM-type phosphatase domain; the sequence is RSGGWADIGS…DNLSVVVICF (265 aa). Mn(2+)-binding residues include D111, G112, D279, and D322.

The protein belongs to the PP2C family. Mg(2+) is required as a cofactor. The cofactor is Mn(2+).

The catalysed reaction is O-phospho-L-seryl-[protein] + H2O = L-seryl-[protein] + phosphate. It catalyses the reaction O-phospho-L-threonyl-[protein] + H2O = L-threonyl-[protein] + phosphate. The polypeptide is Probable protein phosphatase 2C 57 (Oryza sativa subsp. japonica (Rice)).